We begin with the raw amino-acid sequence, 683 residues long: Transforming growth factor-beta-induced protein ig-h3 (683 aa).

The signal sequence occupies residues 1–23 (MALLGRLLPLALALALGPAATHA). S37 carries the phosphoserine modification. The EMI domain occupies 45-99 (GPNVCAVQKLIGTNKKYFTNCKQWYQRKICGKSTVISYECCPGYEKVPGEKGCPA). 5 disulfides stabilise this stretch: C49–C85, C74–C339, C84–C97, C214–C317, and C473–C478. Residue C65 is modified to S-cysteinyl cysteine. FAS1 domains are found at residues 103-236 (LSNL…DKVI), 240-371 (TNNI…DELL), 375-498 (SAKT…DRML), and 502-632 (MGTV…NTVL). Residues 642 to 644 (RGD) carry the Cell attachment site motif.

In terms of assembly, binds to type I, II, and IV collagens. In terms of processing, gamma-carboxyglutamated; gamma-carboxyglutamate residues are formed by vitamin K dependent carboxylation; these residues may be required for binding to calcium. According to a report, does not contain any vitamin K-dependent gamma-carboxyglutamate residues. The EMI domain contains 2 expected intradomain disulfide bridges (Cys-49-Cys85 and Cys-84-Cys-97) and one unusual interdomain disulfide bridge to the second FAS1 domain (Cys-74-Cys-339). This arrangement violates the predicted disulfide bridge pattern of an EMI domain. As to expression, widely distributed in various tissues except for the brain. High levels in corneal epithelium.

The protein resides in the secreted. It localises to the extracellular space. It is found in the extracellular matrix. In terms of biological role, plays a role in cell adhesion. May play a role in cell-collagen interactions. This Sus scrofa (Pig) protein is Transforming growth factor-beta-induced protein ig-h3 (TGFBI).